Here is a 366-residue protein sequence, read N- to C-terminus: Protein U1 (366 aa).

This sequence belongs to the herpesviridae US22 family.

The chain is Protein U1 (U1) from Human herpesvirus 6A (strain Uganda-1102) (HHV-6 variant A).